We begin with the raw amino-acid sequence, 312 residues long: uncharacterized protein (312 aa).

ATP is bound at residue 112–118; sequence LIGLPMV.

Belongs to the MurCDEF family.

This is an uncharacterized protein from Methanothermobacter thermautotrophicus (strain ATCC 29096 / DSM 1053 / JCM 10044 / NBRC 100330 / Delta H) (Methanobacterium thermoautotrophicum).